The following is a 304-amino-acid chain: Caspase-6 (304 aa).

Positions 1-29 (MSGAERRPAAGRVQLDSKPTPTTTADGNQ) are disordered. Residues 1–35 (MSGAERRPAAGRVQLDSKPTPTTTADGNQNITEVD) constitute a propeptide that is removed on maturation. Over residues 17 to 29 (SKPTPTTTADGNQ) the composition is skewed to polar residues. The interval 54–56 (QRR) is tri-arginine exosite. Histidine 133 is an active-site residue. The interval 137-154 (DHVYAYDAQIKIETITNM) is 130's region. The active site involves cysteine 175. A propeptide spanning residues 192-204 (SKDETTVNQTEVD) is cleaved from the precursor.

This sequence belongs to the peptidase C14A family. As to quaternary structure, heterotetramer that consists of two anti-parallel arranged heterodimers, each one formed by a 18 kDa (p18) and a 11 kDa (p11) subunit. Heterotetramer that consists of two anti-parallel arranged heterodimers, each one formed by a 18 kDa (Caspase-6 subunit p18) and a 11 kDa (Caspase-6 subunit p11) subunit. In terms of tissue distribution, widely expressed.

The protein localises to the cytoplasm. The protein resides in the nucleus. It catalyses the reaction Strict requirement for Asp at position P1 and has a preferred cleavage sequence of Val-Glu-His-Asp-|-.. With respect to regulation, during activation, the N-terminal prodomain is removed by cleavage. Concomitantly, double cleavage gives rise to a large 18-kDa and a small 11-kDa subunit. The two large and two small subunits then assemble to form the active CASP6 complex. Intramolecular cleavage at Asp-191 is a prerequisite for CASP6 self-activation. Cysteine protease that plays essential roles in programmed cell death, development and innate immunity. Acts as a non-canonical executioner caspase during apoptosis: localizes in the nucleus and cleaves the nuclear structural protein lamin-A/LMNA thereby inducing nuclear shrinkage and fragmentation. Lamin-A/LMNA cleavage is required for chromatin condensation and nuclear disassembly during apoptotic execution. Plays an essential role in defense against viruses by acting as a central mediator of the ZBP1-mediated pyroptosis, apoptosis, and necroptosis (PANoptosis), independently of its cysteine protease activity. PANoptosis is a unique inflammatory programmed cell death, which provides a molecular scaffold that allows the interactions and activation of machinery required for inflammasome/pyroptosis, apoptosis and necroptosis. The chain is Caspase-6 from Gallus gallus (Chicken).